The primary structure comprises 668 residues: DNA ligase (668 aa).

Residues 31-35 (DYDFD), 80-81 (SL), and Glu111 contribute to the NAD(+) site. The active-site N6-AMP-lysine intermediate is the Lys113. The NAD(+) site is built by Arg134, Glu170, Lys285, and Lys309. Cys403, Cys406, Cys421, and Cys427 together coordinate Zn(2+). Residues 587–668 (NATEKFIGKT…EFITKLNESE (82 aa)) form the BRCT domain.

Belongs to the NAD-dependent DNA ligase family. LigA subfamily. It depends on Mg(2+) as a cofactor. Mn(2+) is required as a cofactor.

It catalyses the reaction NAD(+) + (deoxyribonucleotide)n-3'-hydroxyl + 5'-phospho-(deoxyribonucleotide)m = (deoxyribonucleotide)n+m + AMP + beta-nicotinamide D-nucleotide.. In terms of biological role, DNA ligase that catalyzes the formation of phosphodiester linkages between 5'-phosphoryl and 3'-hydroxyl groups in double-stranded DNA using NAD as a coenzyme and as the energy source for the reaction. It is essential for DNA replication and repair of damaged DNA. The sequence is that of DNA ligase from Flavobacterium johnsoniae (strain ATCC 17061 / DSM 2064 / JCM 8514 / BCRC 14874 / CCUG 350202 / NBRC 14942 / NCIMB 11054 / UW101) (Cytophaga johnsonae).